Reading from the N-terminus, the 236-residue chain is Orotidine 5'-phosphate decarboxylase (236 aa).

Residues D17, K39, 66–75, T125, R186, Q195, G215, and R216 contribute to the substrate site; that span reads DLKFHDIPNT. The active-site Proton donor is K68.

The protein belongs to the OMP decarboxylase family. Type 1 subfamily. In terms of assembly, homodimer.

It catalyses the reaction orotidine 5'-phosphate + H(+) = UMP + CO2. Its pathway is pyrimidine metabolism; UMP biosynthesis via de novo pathway; UMP from orotate: step 2/2. In terms of biological role, catalyzes the decarboxylation of orotidine 5'-monophosphate (OMP) to uridine 5'-monophosphate (UMP). This Buchnera aphidicola subsp. Acyrthosiphon pisum (strain APS) (Acyrthosiphon pisum symbiotic bacterium) protein is Orotidine 5'-phosphate decarboxylase.